The chain runs to 248 residues: Triosephosphate isomerase (248 aa).

9-11 (NWK) lines the substrate pocket. His101 (electrophile) is an active-site residue. Glu170 acts as the Proton acceptor in catalysis. Substrate contacts are provided by residues Gly176, Ser208, and 229-230 (GG).

It belongs to the triosephosphate isomerase family. In terms of assembly, homodimer.

It localises to the cytoplasm. The catalysed reaction is D-glyceraldehyde 3-phosphate = dihydroxyacetone phosphate. Its pathway is carbohydrate biosynthesis; gluconeogenesis. It functions in the pathway carbohydrate degradation; glycolysis; D-glyceraldehyde 3-phosphate from glycerone phosphate: step 1/1. Involved in the gluconeogenesis. Catalyzes stereospecifically the conversion of dihydroxyacetone phosphate (DHAP) to D-glyceraldehyde-3-phosphate (G3P). The chain is Triosephosphate isomerase from Mycoplasmopsis pulmonis (strain UAB CTIP) (Mycoplasma pulmonis).